We begin with the raw amino-acid sequence, 248 residues long: Probable transcriptional regulatory protein PSPA7_4544 (248 aa).

This sequence belongs to the TACO1 family.

The protein localises to the cytoplasm. The polypeptide is Probable transcriptional regulatory protein PSPA7_4544 (Pseudomonas paraeruginosa (strain DSM 24068 / PA7) (Pseudomonas aeruginosa (strain PA7))).